The primary structure comprises 80 residues: Small ribosomal subunit protein bS18 (80 aa).

This sequence belongs to the bacterial ribosomal protein bS18 family. In terms of assembly, part of the 30S ribosomal subunit. Forms a tight heterodimer with protein bS6.

Its function is as follows. Binds as a heterodimer with protein bS6 to the central domain of the 16S rRNA, where it helps stabilize the platform of the 30S subunit. The sequence is that of Small ribosomal subunit protein bS18 from Staphylococcus haemolyticus (strain JCSC1435).